Reading from the N-terminus, the 116-residue chain is NADH-ubiquinone oxidoreductase chain 3 (116 aa).

Transmembrane regions (helical) follow at residues 3-23 (LITT…TVSF), 56-76 (FFLI…LLPL), and 87-107 (LTLV…IYEW).

This sequence belongs to the complex I subunit 3 family.

It localises to the mitochondrion membrane. The catalysed reaction is a ubiquinone + NADH + 5 H(+)(in) = a ubiquinol + NAD(+) + 4 H(+)(out). Its function is as follows. Core subunit of the mitochondrial membrane respiratory chain NADH dehydrogenase (Complex I) that is believed to belong to the minimal assembly required for catalysis. Complex I functions in the transfer of electrons from NADH to the respiratory chain. The immediate electron acceptor for the enzyme is believed to be ubiquinone. This Oncorhynchus kisutch (Coho salmon) protein is NADH-ubiquinone oxidoreductase chain 3 (MT-ND3).